The chain runs to 375 residues: Queuine tRNA-ribosyltransferase (375 aa).

The active-site Proton acceptor is the Asp-89. Residues 89-93 (DSGGF), Asp-143, Gln-187, and Gly-214 each bind substrate. The RNA binding stretch occupies residues 245–251 (GVGKPED). Asp-264 functions as the Nucleophile in the catalytic mechanism. The segment at 269–273 (TRNAR) is RNA binding; important for wobble base 34 recognition. Cys-302, Cys-304, Cys-307, and His-333 together coordinate Zn(2+).

It belongs to the queuine tRNA-ribosyltransferase family. As to quaternary structure, homodimer. Within each dimer, one monomer is responsible for RNA recognition and catalysis, while the other monomer binds to the replacement base PreQ1. It depends on Zn(2+) as a cofactor.

It catalyses the reaction 7-aminomethyl-7-carbaguanine + guanosine(34) in tRNA = 7-aminomethyl-7-carbaguanosine(34) in tRNA + guanine. It participates in tRNA modification; tRNA-queuosine biosynthesis. Functionally, catalyzes the base-exchange of a guanine (G) residue with the queuine precursor 7-aminomethyl-7-deazaguanine (PreQ1) at position 34 (anticodon wobble position) in tRNAs with GU(N) anticodons (tRNA-Asp, -Asn, -His and -Tyr). Catalysis occurs through a double-displacement mechanism. The nucleophile active site attacks the C1' of nucleotide 34 to detach the guanine base from the RNA, forming a covalent enzyme-RNA intermediate. The proton acceptor active site deprotonates the incoming PreQ1, allowing a nucleophilic attack on the C1' of the ribose to form the product. After dissociation, two additional enzymatic reactions on the tRNA convert PreQ1 to queuine (Q), resulting in the hypermodified nucleoside queuosine (7-(((4,5-cis-dihydroxy-2-cyclopenten-1-yl)amino)methyl)-7-deazaguanosine). The protein is Queuine tRNA-ribosyltransferase of Salmonella typhi.